The primary structure comprises 369 residues: Phosphoserine aminotransferase (369 aa).

Residue Arg-42 coordinates L-glutamate. The pyridoxal 5'-phosphate site is built by Trp-101, Thr-152, Asp-176, and Gln-199. At Lys-200 the chain carries N6-(pyridoxal phosphate)lysine. Position 241–242 (241–242) interacts with pyridoxal 5'-phosphate; it reads NT.

Belongs to the class-V pyridoxal-phosphate-dependent aminotransferase family. SerC subfamily. As to quaternary structure, homodimer. The cofactor is pyridoxal 5'-phosphate.

It is found in the cytoplasm. It carries out the reaction O-phospho-L-serine + 2-oxoglutarate = 3-phosphooxypyruvate + L-glutamate. The catalysed reaction is 4-(phosphooxy)-L-threonine + 2-oxoglutarate = (R)-3-hydroxy-2-oxo-4-phosphooxybutanoate + L-glutamate. Its pathway is amino-acid biosynthesis; L-serine biosynthesis; L-serine from 3-phospho-D-glycerate: step 2/3. The protein operates within cofactor biosynthesis; pyridoxine 5'-phosphate biosynthesis; pyridoxine 5'-phosphate from D-erythrose 4-phosphate: step 3/5. Catalyzes the reversible conversion of 3-phosphohydroxypyruvate to phosphoserine and of 3-hydroxy-2-oxo-4-phosphonooxybutanoate to phosphohydroxythreonine. The protein is Phosphoserine aminotransferase of Delftia acidovorans (strain DSM 14801 / SPH-1).